The following is a 422-amino-acid chain: Zinc finger protein 550 (422 aa).

In terms of domain architecture, KRAB spans 12 to 83 (VTFKDVAVTF…KRGLSHATCA (72 aa)). Positions 113–158 (LESSTSSDSRLGRARDEEGLLEMQKGKVTPETDLHKETHLGKVSLE) are disordered. Residues 122 to 152 (RLGRARDEEGLLEMQKGKVTPETDLHKETHL) are compositionally biased toward basic and acidic residues. 8 C2H2-type zinc fingers span residues 203–225 (YKCK…QRVH), 231–253 (YECN…YLIH), 259–281 (YKCL…HPIH), 287–309 (YECS…NRTH), 315–337 (FECK…YIIH), 343–365 (YDCM…QRIH), 371–393 (YECT…SVIH), and 399–421 (YKCI…QRVH).

The protein belongs to the krueppel C2H2-type zinc-finger protein family.

The protein localises to the nucleus. Its function is as follows. May be involved in transcriptional regulation. The sequence is that of Zinc finger protein 550 (ZNF550) from Homo sapiens (Human).